The sequence spans 625 residues: Threonine--tRNA ligase (625 aa).

The segment at 1–143 (MRILLIHSDY…ELSRTIIPEG (143 aa)) is editing domain. A catalytic region spans residues 206-505 (PHVKLMLEHE…MQEGKKPMLP (300 aa)). 3 residues coordinate Zn(2+): C298, H350, and H474.

This sequence belongs to the class-II aminoacyl-tRNA synthetase family. As to quaternary structure, homodimer. It depends on Zn(2+) as a cofactor.

It localises to the cytoplasm. The enzyme catalyses tRNA(Thr) + L-threonine + ATP = L-threonyl-tRNA(Thr) + AMP + diphosphate + H(+). Functionally, catalyzes the attachment of threonine to tRNA(Thr) in a two-step reaction: L-threonine is first activated by ATP to form Thr-AMP and then transferred to the acceptor end of tRNA(Thr). Also edits incorrectly charged L-seryl-tRNA(Thr). The sequence is that of Threonine--tRNA ligase from Pyrococcus horikoshii (strain ATCC 700860 / DSM 12428 / JCM 9974 / NBRC 100139 / OT-3).